The primary structure comprises 221 residues: Keratin-associated protein 10-3 (221 aa).

Repeat copies occupy residues 26-30, 31-35, 36-40, 57-61, 79-83, 89-93, 99-103, 104-108, 109-113, 114-118, 119-123, 124-128, 136-140, 146-150, 151-155, 177-181, 188-192, and 210-214. Positions 26-214 are 18 X 5 AA repeats of C-C-X(3); it reads CCEPPCCATS…RLSSACCGLS (189 aa).

The protein belongs to the KRTAP type 10 family. In terms of assembly, interacts with hair keratins. In terms of tissue distribution, restricted to a narrow region of the hair fiber cuticle, lying approximately 20 cell layers above the apex of the dermal papilla of the hair root; not detected in any other tissues.

In terms of biological role, in the hair cortex, hair keratin intermediate filaments are embedded in an interfilamentous matrix, consisting of hair keratin-associated proteins (KRTAP), which are essential for the formation of a rigid and resistant hair shaft through their extensive disulfide bond cross-linking with abundant cysteine residues of hair keratins. The matrix proteins include the high-sulfur and high-glycine-tyrosine keratins. This chain is Keratin-associated protein 10-3 (KRTAP10-3), found in Homo sapiens (Human).